Reading from the N-terminus, the 199-residue chain is Nucleoside triphosphate pyrophosphatase (199 aa).

Residue aspartate 76 is the Proton acceptor of the active site.

It belongs to the Maf family. It depends on a divalent metal cation as a cofactor.

It localises to the cytoplasm. The enzyme catalyses a ribonucleoside 5'-triphosphate + H2O = a ribonucleoside 5'-phosphate + diphosphate + H(+). It carries out the reaction a 2'-deoxyribonucleoside 5'-triphosphate + H2O = a 2'-deoxyribonucleoside 5'-phosphate + diphosphate + H(+). Its function is as follows. Nucleoside triphosphate pyrophosphatase. May have a dual role in cell division arrest and in preventing the incorporation of modified nucleotides into cellular nucleic acids. In Ruegeria pomeroyi (strain ATCC 700808 / DSM 15171 / DSS-3) (Silicibacter pomeroyi), this protein is Nucleoside triphosphate pyrophosphatase.